A 204-amino-acid polypeptide reads, in one-letter code: MADKGLLLVLSGPSGVGKGTVKSAIVENKVFPFEYSVSMTTRKPRPGEVNGKDYYFVSEGRFKEAINNGELLEYNNYVGHYYGTPLGPVKEMLHEGKDVLLEIDVNGAQKVREKMPDGVFIFLTPPDLHTLHLRLEHRGTESEDVIRGRIKQARNEILEMEDYDYAVVNDTVANAVDHIKAIVDAEHVSVKRVIDDYRKMVEED.

Positions 5 to 184 constitute a Guanylate kinase-like domain; that stretch reads GLLLVLSGPS…AVDHIKAIVD (180 aa). Residue 12–19 coordinates ATP; it reads GPSGVGKG.

It belongs to the guanylate kinase family.

The protein localises to the cytoplasm. The catalysed reaction is GMP + ATP = GDP + ADP. Essential for recycling GMP and indirectly, cGMP. This Lactobacillus acidophilus (strain ATCC 700396 / NCK56 / N2 / NCFM) protein is Guanylate kinase.